A 414-amino-acid polypeptide reads, in one-letter code: Esterase FrsA (414 aa).

This sequence belongs to the FrsA family.

The enzyme catalyses a carboxylic ester + H2O = an alcohol + a carboxylate + H(+). In terms of biological role, catalyzes the hydrolysis of esters. The polypeptide is Esterase FrsA (Salmonella typhi).